Reading from the N-terminus, the 223-residue chain is Transcriptional regulator HMO1 (223 aa).

Disordered stretches follow at residues 69–89 (IEAT…APKK) and 165–223 (DGSA…HGSP). A compositionally biased stretch (basic and acidic residues) spans 70 to 86 (EATESKKKRKQEKDPNA). The HMG box DNA-binding region spans 87-160 (PKKPLTMFFQ…IYNIEKKKYE (74 aa)). Basic residues predominate over residues 204–223 (KKKKKTEKKEKKKKSGHGSP).

It localises to the nucleus. In terms of biological role, transcription factor that binds upstream of hexose and ergosterol metabolism, as well as cell cycle genes. Activates pseudohyphal growth. The sequence is that of Transcriptional regulator HMO1 (HMO1) from Candida albicans (strain SC5314 / ATCC MYA-2876) (Yeast).